Reading from the N-terminus, the 278-residue chain is MATH domain and coiled-coil domain-containing protein At1g31400 (278 aa).

One can recognise an MATH domain in the interval 6–131; the sequence is EKRITWTIKN…SGQVKIVAEV (126 aa). A coiled-coil region spans residues 232 to 267; that stretch reads KLDWLEKKLKEVGKTRMQQLEQNLKDLKESLCWSSD.

The protein is MATH domain and coiled-coil domain-containing protein At1g31400 of Arabidopsis thaliana (Mouse-ear cress).